We begin with the raw amino-acid sequence, 128 residues long: UPF0325 protein YaeH (128 aa).

The protein belongs to the UPF0325 family.

The protein is UPF0325 protein YaeH of Escherichia fergusonii (strain ATCC 35469 / DSM 13698 / CCUG 18766 / IAM 14443 / JCM 21226 / LMG 7866 / NBRC 102419 / NCTC 12128 / CDC 0568-73).